The chain runs to 291 residues: Acetylglutamate kinase (291 aa).

Residues 65 to 66, Arg87, and Asn186 each bind substrate; that span reads GG.

Belongs to the acetylglutamate kinase family. ArgB subfamily.

The protein resides in the cytoplasm. The catalysed reaction is N-acetyl-L-glutamate + ATP = N-acetyl-L-glutamyl 5-phosphate + ADP. It participates in amino-acid biosynthesis; L-arginine biosynthesis; N(2)-acetyl-L-ornithine from L-glutamate: step 2/4. In terms of biological role, catalyzes the ATP-dependent phosphorylation of N-acetyl-L-glutamate. The protein is Acetylglutamate kinase of Mycolicibacterium vanbaalenii (strain DSM 7251 / JCM 13017 / BCRC 16820 / KCTC 9966 / NRRL B-24157 / PYR-1) (Mycobacterium vanbaalenii).